We begin with the raw amino-acid sequence, 338 residues long: Solute carrier family 35 member G4 (338 aa).

Residues 1-29 (MAGSHPYFNLPDSTHPSPPSTPPSLHWHQ) are disordered. 7 helical membrane passes run 37–57 (TNGLLVALLGGGLPAGFVGPL), 160–180 (CGLLGSILGLIIIVGPGLWTL), 190–210 (GLGYVQAFLGGLALSLGLLVY), 221–241 (TVAFLSGLVGLLGSVPGLFVL), 250–270 (LLSWSCVGAVGILTLVSFTCV), 281–301 (LVCAVLHSEVVMALILQYFML), and 305–325 (VAPSDIMGAGVVLGSIAIITA). The EamA 1 domain occupies 49–174 (LPAGFVGPLS…SILGLIIIVG (126 aa)). The 54-residue stretch at 272-325 (YAVTKAHPALVCAVLHSEVVMALILQYFMLHETVAPSDIMGAGVVLGSIAIITA) folds into the EamA 2 domain.

It belongs to the SLC35G solute transporter family.

It is found in the membrane. The chain is Solute carrier family 35 member G4 (SLC35G4) from Homo sapiens (Human).